Here is a 669-residue protein sequence, read N- to C-terminus: Armadillo repeat-containing protein gudu (669 aa).

The segment covering 1 to 10 (MIGTSSGTSH) has biased composition (polar residues). The interval 1–53 (MIGTSSGTSHNRSRKKKEQCGSCPNRFSKDKRQVAAEDSDTTEVESSTDEEER) is disordered. A compositionally biased stretch (acidic residues) spans 37–51 (EDSDTTEVESSTDEE). ARM repeat units lie at residues 100 to 139 (QINQFAISDIGGLDVLVNILECSDTKCCLGALKVLSDITL), 141 to 180 (IDIRKTIVDLDGIPLIVDILNSSMKDLKTMAAETLANVCK), 240 to 279 (KHNMEQMRKSGIVPLMAQLLKSCHIDVVIPIMGTVRKCSS), 281 to 320 (PKFQLAITTEGMIPDIVSHLSSENTELKMEGSTAIYKCAF), 322 to 365 (GTTR…MCAV), 367 to 406 (DANVKVLDQLRTVNHLVALLNDECDEVLTNVTGAISECVR), 408 to 447 (QSNREQLRQAGGLPAMVSLLNSSHAPLLENLAKGLKECAE), 492 to 531 (DSAELVRSLVGAMELVVGLLKSKDIMVLSAVCAAIATIAQ), 574 to 613 (GNNTEELGRLRTVTPIVTYMTSDNPLVHRSTAMALEKLSM), and 615 to 654 (PQNCITMHQSGVVPFLLECIGSTNKELQLAAAGCLRNIRE).

Highly expressed in testis.

In terms of biological role, important for spermatogenesis where it may have a role in sperm individualization. The polypeptide is Armadillo repeat-containing protein gudu (Drosophila melanogaster (Fruit fly)).